A 236-amino-acid chain; its full sequence is Histone H1 (236 aa).

Residues 1-10 show a composition bias toward basic and acidic residues; it reads MPPKKTETKA. 2 disordered regions span residues 1 to 36 and 94 to 236; these read MPPK…SPST and KGVF…AEKA. The segment covering 11-36 has biased composition (low complexity); the sequence is ADASAAAAPAPAAAPTSAPKTKSPST. The 76-residue stretch at 36-111 folds into the H15 domain; the sequence is THASYLDMIT…GPSGGTKLAK (76 aa). The segment covering 109 to 122 has biased composition (basic residues); that stretch reads LAKKVAKPAPKKAA. The segment covering 123-150 has biased composition (basic and acidic residues); that stretch reads PKKETKEKKPAAAKKEGAAKKETKEKKA. The segment covering 153 to 162 has biased composition (low complexity); the sequence is AKKAAAPKKA. Over residues 165–174 the composition is skewed to basic and acidic residues; it reads PKKEVKEKKA. Residues 202–220 show a composition bias toward low complexity; sequence AKSTAKPAAAKKAAAPKKA. A compositionally biased stretch (basic and acidic residues) spans 224–236; sequence KKAEKAEPAAEKA.

It belongs to the histone H1/H5 family.

It is found in the nucleus. Its subcellular location is the chromosome. Functionally, could act as an H1-type linker histone. This chain is Histone H1 (hH1), found in Neurospora crassa (strain ATCC 24698 / 74-OR23-1A / CBS 708.71 / DSM 1257 / FGSC 987).